The sequence spans 286 residues: tRNA (guanine-N(7)-)-methyltransferase (286 aa).

S-adenosyl-L-methionine is bound by residues Gly103, 126–127, 161–162, and Cys181; these read EI and NA. The active site involves Asp184. Position 259 to 261 (259 to 261) interacts with S-adenosyl-L-methionine; sequence TEE.

This sequence belongs to the class I-like SAM-binding methyltransferase superfamily. TrmB family. In terms of assembly, forms a complex with TRM82.

It is found in the nucleus. The catalysed reaction is guanosine(46) in tRNA + S-adenosyl-L-methionine = N(7)-methylguanosine(46) in tRNA + S-adenosyl-L-homocysteine. It functions in the pathway tRNA modification; N(7)-methylguanine-tRNA biosynthesis. Catalyzes the formation of N(7)-methylguanine at position 46 (m7G46) in tRNA. This chain is tRNA (guanine-N(7)-)-methyltransferase, found in Vanderwaltozyma polyspora (strain ATCC 22028 / DSM 70294 / BCRC 21397 / CBS 2163 / NBRC 10782 / NRRL Y-8283 / UCD 57-17) (Kluyveromyces polysporus).